The sequence spans 372 residues: Cytochrome b (372 aa).

4 helical membrane passes run 25–45, 69–90, 105–125, and 170–190; these read FGSM…FLAI, WIMQ…YIHI, WLSG…GYVL, and FFAL…IHIM. 2 residues coordinate heme b: histidine 75 and histidine 89. 2 residues coordinate heme b: histidine 174 and histidine 188. Histidine 193 serves as a coordination point for a ubiquinone. A run of 4 helical transmembrane segments spans residues 218 to 238, 280 to 300, 312 to 332, and 339 to 358; these read YKDM…LSFS, LGGT…PFTH, LSQI…WTAS, and FILI…IMAP.

Belongs to the cytochrome b family. In terms of assembly, the cytochrome bc1 complex contains 3 respiratory subunits (MT-CYB, CYC1 and UQCRFS1), 2 core proteins (UQCRC1 and UQCRC2) and probably 6 low-molecular weight proteins. Heme b serves as cofactor.

The protein resides in the mitochondrion inner membrane. In terms of biological role, component of the ubiquinol-cytochrome c reductase complex (complex III or cytochrome b-c1 complex) that is part of the mitochondrial respiratory chain. The b-c1 complex mediates electron transfer from ubiquinol to cytochrome c. Contributes to the generation of a proton gradient across the mitochondrial membrane that is then used for ATP synthesis. The sequence is that of Cytochrome b (MT-CYB) from Hemachatus haemachatus (Rinkhals).